We begin with the raw amino-acid sequence, 842 residues long: Pentatricopeptide repeat-containing protein At3g23020 (842 aa).

The tract at residues 40–61 (YVPGTHESDKGPQRSTRNGDRG) is disordered. Residues 45–59 (HESDKGPQRSTRNGD) show a composition bias toward basic and acidic residues. PPR repeat units follow at residues 186 to 220 (NVIH…GIKP), 221 to 255 (INST…GMQP), 256 to 290 (DEVT…ENKA), 297 to 331 (SSYT…GIVP), 332 to 362 (TTVT…MKLH), 366 to 400 (DTRT…GLKP), 401 to 435 (DPVS…NVEI), 436 to 470 (DEYT…GNMS), 474 to 500 (YSAN…CQEV), 504 to 538 (TVIE…GVTP), 539 to 573 (DKCT…GYVS), 574 to 608 (DCIP…NIEP), 609 to 643 (DVVV…GIPG), 644 to 674 (NSVI…LLQS), 682 to 712 (DVYT…MKQR), 716 to 750 (NEFT…KILT), 751 to 785 (DPLS…GIQP), and 786 to 820 (DDST…EIKR).

Belongs to the PPR family. P subfamily.

This Arabidopsis thaliana (Mouse-ear cress) protein is Pentatricopeptide repeat-containing protein At3g23020.